Here is a 330-residue protein sequence, read N- to C-terminus: 5'-AMP-activated protein kinase subunit gamma-1 (330 aa).

The tract at residues 1 to 24 (MEAVPSSDSYPAVENEHLQETPES) is disordered. CBS domains lie at 43–103 (PTSS…KSAL), 125–187 (SFKP…PKPE), and 198–260 (IGTY…NLDV). Residues R70, 85–90 (MLTITD), V130, 151–152 (HR), and K170 contribute to the ADP site. Residues R70, 85 to 90 (MLTITD), V130, H151, 151 to 152 (HR), K170, T200, A205, 226 to 227 (SA), and 242 to 245 (SKFD) contribute to the AMP site. ATP-binding positions include R70, 85–90 (MLTITD), V130, 151–152 (HR), R152, and K170. The AMPK pseudosubstrate motif lies at 138–159 (LFDAVSSLIRNKIHRLPVIDPE). 242-245 (SKFD) provides a ligand contact to ADP. 242–245 (SKFD) contributes to the ATP binding site. S261 is subject to Phosphoserine; by ULK1. T263 is subject to Phosphothreonine; by ULK1. Residue R269 coordinates ADP. R269 is an AMP binding site. R269 contributes to the ATP binding site. Residue S270 is modified to Phosphoserine; by ULK1. Positions 272 to 329 (YFEGVLKCYLHETLETIINRLVEAEVHRLVVVDENDVVKGIVSLSDILQALVLTGGEK) constitute a CBS 4 domain. ADP-binding positions include L277 and 298 to 299 (HR). AMP contacts are provided by residues L277, H298, 298–299 (HR), and 314–317 (SLSD). ATP is bound by residues L277 and 298-299 (HR).

Belongs to the 5'-AMP-activated protein kinase gamma subunit family. In terms of assembly, AMPK is a heterotrimer of an alpha catalytic subunit (PRKAA1 or PRKAA2), a beta (PRKAB1 or PRKAB2) and a gamma non-catalytic subunits (PRKAG1, PRKAG2 or PRKAG3). Interacts with FNIP1 and FNIP2. Phosphorylated by ULK1 and ULK2; leading to negatively regulate AMPK activity and suggesting the existence of a regulatory feedback loop between ULK1, ULK2 and AMPK. In terms of processing, glycosylated; O-GlcNAcylated by OGT, promoting the AMP-activated protein kinase (AMPK) activity.

Its function is as follows. AMP/ATP-binding subunit of AMP-activated protein kinase (AMPK), an energy sensor protein kinase that plays a key role in regulating cellular energy metabolism. In response to reduction of intracellular ATP levels, AMPK activates energy-producing pathways and inhibits energy-consuming processes: inhibits protein, carbohydrate and lipid biosynthesis, as well as cell growth and proliferation. AMPK acts via direct phosphorylation of metabolic enzymes, and by longer-term effects via phosphorylation of transcription regulators. Also acts as a regulator of cellular polarity by remodeling the actin cytoskeleton; probably by indirectly activating myosin. Gamma non-catalytic subunit mediates binding to AMP, ADP and ATP, leading to activate or inhibit AMPK: AMP-binding results in allosteric activation of alpha catalytic subunit (PRKAA1 or PRKAA2) both by inducing phosphorylation and preventing dephosphorylation of catalytic subunits. ADP also stimulates phosphorylation, without stimulating already phosphorylated catalytic subunit. ATP promotes dephosphorylation of catalytic subunit, rendering the AMPK enzyme inactive. In Bos taurus (Bovine), this protein is 5'-AMP-activated protein kinase subunit gamma-1 (PRKAG1).